We begin with the raw amino-acid sequence, 361 residues long: Chorismate synthase (361 aa).

The NADP(+) site is built by R48 and R54. FMN is bound by residues 125–127, 238–239, G278, 293–297, and R319; these read RSS, NA, and KPTSS.

It belongs to the chorismate synthase family. Homotetramer. It depends on FMNH2 as a cofactor.

It carries out the reaction 5-O-(1-carboxyvinyl)-3-phosphoshikimate = chorismate + phosphate. It participates in metabolic intermediate biosynthesis; chorismate biosynthesis; chorismate from D-erythrose 4-phosphate and phosphoenolpyruvate: step 7/7. In terms of biological role, catalyzes the anti-1,4-elimination of the C-3 phosphate and the C-6 proR hydrogen from 5-enolpyruvylshikimate-3-phosphate (EPSP) to yield chorismate, which is the branch point compound that serves as the starting substrate for the three terminal pathways of aromatic amino acid biosynthesis. This reaction introduces a second double bond into the aromatic ring system. The chain is Chorismate synthase from Salmonella arizonae (strain ATCC BAA-731 / CDC346-86 / RSK2980).